The sequence spans 680 residues: MGQYLAALYSQIYGLCLDVSLVEFCKPTSLCLTKIADACNKVHKIHEYVSASLLQQNSLEACALSLELSHLLENLKTRLFFIYHALLDNPTYFSKLHSSVGLCDLHKKLNVQFYNECGIEVNLTLINDIERFLSRLNCVFYCLSSSSALLALKEALTFLGQLRGISPVPRTDIYITSSSCLECVLETSVVPNQGETLNELLLNHNCHHLVERVPPEPIKGLFESELQNLGLKVHIATDTIEQSVGKHEAVLQESLAYLKAHTIFNNTPKQVLELSNLLYWNSGQNQPSDSGVKCSELSKIWSRENELQKYRPKLNNGEPPGHFFDLHSPQGTELLFCGGIFSSTHDTITALKQDCSNTFMKQTRLTGVAKRQNELFMRLSNILYGEEVPTKPKQTESALKTCDQSDASKNQVLQEAELRKEAYLNKLSKEGFRKLQACLSTHEEMLNSQLSLKIWGSVVYKQSATLLNHFLFRQSWVTQASLPPSVNGSPEQFENSKFIKSSLYVKSLSREYLSTLRLHFFALITGPLTTQEGLFPSPPNVQLAHCLEAAHFMPHQKMLLNEMIKPTMEPQDWICSNFNEFYTIHETDLNGVQYECWKYLRELVLSVALYNITWEKNLCIYRTDHSCPTACSSGIKEGLYVTYESHAPLILVYSNKKWIFKDLYALLYAHMQLANNGAHR.

The C3H1-type zinc finger occupies 180-208; that stretch reads CLECVLETSVVPNQGETLNELLLNHNCHH. 610 to 617 is a binding site for ATP; it reads YNITWEKN.

It belongs to the herpesviridae TRM1 protein family. Associates with TRM2 and TRM3 to form the tripartite terminase complex. Interacts with portal protein.

The protein localises to the host nucleus. In terms of biological role, component of the molecular motor that translocates viral genomic DNA in empty capsid during DNA packaging. Forms a tripartite terminase complex together with TRM2 and TRM3 in the host cytoplasm. Once the complex reaches the host nucleus, it interacts with the capsid portal vertex. This portal forms a ring in which genomic DNA is translocated into the capsid. TRM1 carries an endonuclease activity that plays an important role for the cleavage of concatemeric viral DNA into unit length genomes. In Alcelaphine herpesvirus 1 (strain C500) (AlHV-1), this protein is Tripartite terminase subunit 1.